The chain runs to 459 residues: UDP-N-acetylmuramoylalanine--D-glutamate ligase (459 aa).

118–124 is a binding site for ATP; sequence GTNGKTT.

The protein belongs to the MurCDEF family.

The protein resides in the cytoplasm. It carries out the reaction UDP-N-acetyl-alpha-D-muramoyl-L-alanine + D-glutamate + ATP = UDP-N-acetyl-alpha-D-muramoyl-L-alanyl-D-glutamate + ADP + phosphate + H(+). Its pathway is cell wall biogenesis; peptidoglycan biosynthesis. Functionally, cell wall formation. Catalyzes the addition of glutamate to the nucleotide precursor UDP-N-acetylmuramoyl-L-alanine (UMA). The protein is UDP-N-acetylmuramoylalanine--D-glutamate ligase of Desulfosudis oleivorans (strain DSM 6200 / JCM 39069 / Hxd3) (Desulfococcus oleovorans).